Reading from the N-terminus, the 283-residue chain is MLIIETLPLLRQQIRRLRMEGKRVALVPTMGNLHDGHMKLVDEAKARADVVVVSIFVNPMQFDRPEDLARYPRTLQEDCEKLNKRKVDLVFAPSVKEIYPNGTETHTYVDVPGLSTMLEGASRPGHFRGVSTIVSKLFNLVQPDIACFGEKDFQQLALIRKMVADMGFDIEIVGVPIMRAKDGLALSSRNGYLTAEQRKIAPGLYKVLSSIADKLQAGERDLDEIIAIAGQELNEKGFRADDIQIRDADTLLEVSENSKRAVILVAAWLGDARLIDNKMVELA.

30 to 37 (MGNLHDGH) lines the ATP pocket. H37 serves as the catalytic Proton donor. (R)-pantoate is bound at residue Q61. Q61 provides a ligand contact to beta-alanine. 149 to 152 (GEKD) provides a ligand contact to ATP. Q155 is a (R)-pantoate binding site. 186–189 (LSSR) contributes to the ATP binding site.

Belongs to the pantothenate synthetase family. In terms of assembly, homodimer.

It is found in the cytoplasm. It carries out the reaction (R)-pantoate + beta-alanine + ATP = (R)-pantothenate + AMP + diphosphate + H(+). It functions in the pathway cofactor biosynthesis; (R)-pantothenate biosynthesis; (R)-pantothenate from (R)-pantoate and beta-alanine: step 1/1. Catalyzes the condensation of pantoate with beta-alanine in an ATP-dependent reaction via a pantoyl-adenylate intermediate. This Escherichia coli O6:H1 (strain CFT073 / ATCC 700928 / UPEC) protein is Pantothenate synthetase.